The sequence spans 233 residues: Uridylate kinase (233 aa).

9–10 contacts ATP; sequence GS. G43 contributes to the UMP binding site. Positions 44 and 48 each coordinate ATP. UMP-binding positions include D65 and 113–119; that span reads VTPGQTT. 3 residues coordinate ATP: T139, Y145, and D148.

This sequence belongs to the UMP kinase family. As to quaternary structure, homohexamer.

The protein resides in the cytoplasm. It catalyses the reaction UMP + ATP = UDP + ADP. It participates in pyrimidine metabolism; CTP biosynthesis via de novo pathway; UDP from UMP (UMPK route): step 1/1. Inhibited by UTP. Its function is as follows. Catalyzes the reversible phosphorylation of UMP to UDP. In Methanosarcina barkeri (strain Fusaro / DSM 804), this protein is Uridylate kinase.